The primary structure comprises 1209 residues: Limbin (1209 aa).

The Extracellular portion of the chain corresponds to 1 to 200 (MKFSKEIEVF…VLPNHGLHAA (200 aa)). Residue N120 is glycosylated (N-linked (GlcNAc...) asparagine). Residues 201–221 (GFCVAFILSLVLTWAVLFFMV) form a helical membrane-spanning segment. Over 222–1209 (RYQCVKGSSL…KKAAWALGLN (988 aa)) the chain is Cytoplasmic. 3 coiled-coil regions span residues 355 to 394 (TAEC…SAVE), 553 to 697 (KQKL…EERD), and 920 to 1012 (ELQE…METD). Basic and acidic residues predominate over residues 689–700 (ERLEGEERDRGQ). The interval 689–714 (ERLEGEERDRGQEGVQSVRQRLKDDA) is disordered.

Component of the EvC complex composed of EFCAB7, IQCE, EVC2 and EVC; built from two subcomplexes, EVC2:EVC and EFCAB7:IQCE. Interacts with EVC. Interacts (via N-terminal end) with EFCAB7. Interacts (via N-terminal end) with IQCE.

Its subcellular location is the cell membrane. The protein localises to the cytoplasm. It is found in the cytoskeleton. The protein resides in the cilium basal body. It localises to the cell projection. Its subcellular location is the cilium. The protein localises to the cilium membrane. It is found in the nucleus. In terms of biological role, component of the EvC complex that positively regulates ciliary Hedgehog (Hh) signaling. Plays a critical role in bone formation and skeletal development. May be involved in early embryonic morphogenesis. In Bos taurus (Bovine), this protein is Limbin (EVC2).